A 143-amino-acid polypeptide reads, in one-letter code: Nucleoside diphosphate kinase (143 aa).

6 residues coordinate ATP: Lys-11, Phe-59, Arg-87, Thr-93, Arg-104, and Asn-114. His-117 acts as the Pros-phosphohistidine intermediate in catalysis.

It belongs to the NDK family. Homotetramer. The cofactor is Mg(2+).

Its subcellular location is the cytoplasm. The catalysed reaction is a 2'-deoxyribonucleoside 5'-diphosphate + ATP = a 2'-deoxyribonucleoside 5'-triphosphate + ADP. The enzyme catalyses a ribonucleoside 5'-diphosphate + ATP = a ribonucleoside 5'-triphosphate + ADP. Its function is as follows. Major role in the synthesis of nucleoside triphosphates other than ATP. The ATP gamma phosphate is transferred to the NDP beta phosphate via a ping-pong mechanism, using a phosphorylated active-site intermediate. The chain is Nucleoside diphosphate kinase from Escherichia coli O81 (strain ED1a).